Here is a 172-residue protein sequence, read N- to C-terminus: 3-hydroxydecanoyl-[acyl-carrier-protein] dehydratase (172 aa).

H71 is a catalytic residue.

It belongs to the thioester dehydratase family. FabA subfamily. As to quaternary structure, homodimer.

The protein resides in the cytoplasm. It catalyses the reaction a (3R)-hydroxyacyl-[ACP] = a (2E)-enoyl-[ACP] + H2O. It carries out the reaction (3R)-hydroxydecanoyl-[ACP] = (2E)-decenoyl-[ACP] + H2O. The catalysed reaction is (2E)-decenoyl-[ACP] = (3Z)-decenoyl-[ACP]. Its pathway is lipid metabolism; fatty acid biosynthesis. Functionally, necessary for the introduction of cis unsaturation into fatty acids. Catalyzes the dehydration of (3R)-3-hydroxydecanoyl-ACP to E-(2)-decenoyl-ACP and then its isomerization to Z-(3)-decenoyl-ACP. Can catalyze the dehydratase reaction for beta-hydroxyacyl-ACPs with saturated chain lengths up to 16:0, being most active on intermediate chain length. This Blochmanniella floridana protein is 3-hydroxydecanoyl-[acyl-carrier-protein] dehydratase.